Consider the following 257-residue polypeptide: Triosephosphate isomerase (257 aa).

9–11 (NWK) contributes to the substrate binding site. The active-site Electrophile is the His-97. The Proton acceptor role is filled by Glu-169. Residues Gly-175, Ser-214, and 235–236 (GG) contribute to the substrate site.

The protein belongs to the triosephosphate isomerase family. As to quaternary structure, homodimer.

The protein localises to the cytoplasm. The catalysed reaction is D-glyceraldehyde 3-phosphate = dihydroxyacetone phosphate. The protein operates within carbohydrate biosynthesis; gluconeogenesis. It functions in the pathway carbohydrate degradation; glycolysis; D-glyceraldehyde 3-phosphate from glycerone phosphate: step 1/1. Its function is as follows. Involved in the gluconeogenesis. Catalyzes stereospecifically the conversion of dihydroxyacetone phosphate (DHAP) to D-glyceraldehyde-3-phosphate (G3P). This chain is Triosephosphate isomerase, found in Vibrio cholerae serotype O1 (strain ATCC 39315 / El Tor Inaba N16961).